Reading from the N-terminus, the 476-residue chain is ATP synthase subunit beta (476 aa).

G158–T165 is a binding site for ATP.

The protein belongs to the ATPase alpha/beta chains family. As to quaternary structure, F-type ATPases have 2 components, CF(1) - the catalytic core - and CF(0) - the membrane proton channel. CF(1) has five subunits: alpha(3), beta(3), gamma(1), delta(1), epsilon(1). CF(0) has three main subunits: a(1), b(2) and c(9-12). The alpha and beta chains form an alternating ring which encloses part of the gamma chain. CF(1) is attached to CF(0) by a central stalk formed by the gamma and epsilon chains, while a peripheral stalk is formed by the delta and b chains.

Its subcellular location is the cell inner membrane. It carries out the reaction ATP + H2O + 4 H(+)(in) = ADP + phosphate + 5 H(+)(out). In terms of biological role, produces ATP from ADP in the presence of a proton gradient across the membrane. The catalytic sites are hosted primarily by the beta subunits. This chain is ATP synthase subunit beta, found in Paracidovorax citrulli (strain AAC00-1) (Acidovorax citrulli).